The following is a 630-amino-acid chain: MIYPTQYDVIVIGGGHAGTEACLAAARMGCKTLLLTHNIETLGQMSCNPAIGGIGKSHLVKEIDALGGAMALATDKGGIQFRILNSRKGPAVRATRAQADRALYKAAVREILENQPNLDIFQQAADDLVVEGERVTGVTTQMGVTFKAPTVVLTAGTFLGGKIHIGMENHSGGRAGDPPSIALASRLRELPLRVDRLKTGTPPRIDARSVNFDGLEKQWGEEKTPVMSYMGSLADHPEQTCCWITHTNAQTHDFIRSGFDRSPMFTGVIEGVGPRYCPSIEDKVNRFADKDSHQIFIEPEGLKTHELYPNGISTSLPFDVQMAFVRSIKGFENAHITRPGYAIEYDFFDPRDLKYSFETKHIEGLFFAGQINGTTGYEEAGAQGLLAGLNAALKAQGKEAWCPRRDEAYIGVLADDLISMGTREPYRMFTSRAEYRLLLREDNADMRLTEKGRELGLVDDARWQAFCKKREAIELETQRMRTTWIQPNSAEANALAAKMPAELAREYSLLDLLKRPELTYDDLGSLKGEAVSDPQVAEQVEINTKYAGYINRQTDDIERMRQHENTVIPVEFDYMSVEGLSNELKQKLSEARPETLSRASRIPGVTPAAVSLILIYLKKRGLLKNKAALA.

Residue 13 to 18 (GGGHAG) coordinates FAD. 273 to 287 (GPRYCPSIEDKVNRF) provides a ligand contact to NAD(+).

It belongs to the MnmG family. Homodimer. Heterotetramer of two MnmE and two MnmG subunits. The cofactor is FAD.

It localises to the cytoplasm. In terms of biological role, NAD-binding protein involved in the addition of a carboxymethylaminomethyl (cmnm) group at the wobble position (U34) of certain tRNAs, forming tRNA-cmnm(5)s(2)U34. This is tRNA uridine 5-carboxymethylaminomethyl modification enzyme MnmG from Saccharophagus degradans (strain 2-40 / ATCC 43961 / DSM 17024).